A 180-amino-acid polypeptide reads, in one-letter code: tRNA (cytidine(56)-2'-O)-methyltransferase (180 aa).

Residues Leu84 and 112–116 (GAEKV) each bind S-adenosyl-L-methionine.

It belongs to the aTrm56 family. In terms of assembly, homodimer.

The protein resides in the cytoplasm. The enzyme catalyses cytidine(56) in tRNA + S-adenosyl-L-methionine = 2'-O-methylcytidine(56) in tRNA + S-adenosyl-L-homocysteine + H(+). Functionally, specifically catalyzes the AdoMet-dependent 2'-O-ribose methylation of cytidine at position 56 in tRNAs. This chain is tRNA (cytidine(56)-2'-O)-methyltransferase, found in Haloarcula marismortui (strain ATCC 43049 / DSM 3752 / JCM 8966 / VKM B-1809) (Halobacterium marismortui).